A 224-amino-acid polypeptide reads, in one-letter code: MINQKKIAGEKACEWIKDGMVVGLGTGSTVYYTIEKLGEMVNNGLHITGVATSEETSKQAQNLGIPLKSLNDVAEIDITIDGADEIDTDFQGIKGGGGALLREKMVASASLKNIWVVSEEKLVRNLGKFPLPIEVIPFGWKQIERTLEKEHVQTILRRQSSGEIYVTNNGNYILDIVNQTFRDAEMWQEKLAQIPGIVEHGLFLHYVDIIVCAKANGEIELIKK.

Residues 26-29 (TGST), 81-84 (DGAD), and 94-97 (KGGG) contribute to the substrate site. Glu103 acts as the Proton acceptor in catalysis. Position 121 (Lys121) interacts with substrate.

It belongs to the ribose 5-phosphate isomerase family. In terms of assembly, homodimer.

It catalyses the reaction aldehydo-D-ribose 5-phosphate = D-ribulose 5-phosphate. Its pathway is carbohydrate degradation; pentose phosphate pathway; D-ribose 5-phosphate from D-ribulose 5-phosphate (non-oxidative stage): step 1/1. Its function is as follows. Catalyzes the reversible conversion of ribose-5-phosphate to ribulose 5-phosphate. In Listeria monocytogenes serotype 4b (strain CLIP80459), this protein is Ribose-5-phosphate isomerase A.